Reading from the N-terminus, the 294-residue chain is Cyclin-G1 (294 aa).

It belongs to the cyclin family. Cyclin G subfamily.

It localises to the nucleus. May play a role in growth regulation. Is associated with G2/M phase arrest in response to DNA damage. May be an intermediate by which p53 mediates its role as an inhibitor of cellular proliferation. In Rattus norvegicus (Rat), this protein is Cyclin-G1 (Ccng1).